The chain runs to 628 residues: Netrin-4 (628 aa).

The first 19 residues, 1–19 (MGSCARLLLLWGCSAVAAG), serve as a signal peptide directing secretion. Positions 30–261 (CEKACNPRMG…AVYDFIVKGS (232 aa)) constitute a Laminin N-terminal domain. Residues asparagine 56 and asparagine 163 are each glycosylated (N-linked (GlcNAc...) asparagine). 12 cysteine pairs are disulfide-bonded: cysteine 262-cysteine 271, cysteine 264-cysteine 293, cysteine 295-cysteine 304, cysteine 307-cysteine 329, cysteine 332-cysteine 341, cysteine 334-cysteine 359, cysteine 362-cysteine 371, cysteine 374-cysteine 392, cysteine 395-cysteine 413, cysteine 397-cysteine 420, cysteine 422-cysteine 431, and cysteine 434-cysteine 446. Laminin EGF-like domains lie at 262 to 331 (CFCN…ECRT), 332 to 394 (CKCN…ACKA), and 395 to 448 (CSCH…GCRP). The N-linked (GlcNAc...) asparagine glycan is linked to asparagine 353. An N-linked (GlcNAc...) asparagine glycan is attached at asparagine 483. 2 disulfides stabilise this stretch: cysteine 506/cysteine 576 and cysteine 520/cysteine 627. The region spanning 506–627 (CECKEQVLGN…RVMHILKRDC (122 aa)) is the NTR domain.

As to quaternary structure, may form a homodimer. In terms of tissue distribution, expressed in kidney, liver, heart, ovary, testis, retina, brain, olfactory bulb, and widely expressed in embryo.

The protein localises to the secreted. Its subcellular location is the extracellular space. It is found in the extracellular matrix. The protein resides in the basement membrane. Its function is as follows. May play an important role in neural, kidney and vascular development. Promotes neurite elongation from olfactory bulb explants. The sequence is that of Netrin-4 (Ntn4) from Mus musculus (Mouse).